The following is a 572-amino-acid chain: MLRLTCFTPSFSRACCPLFAMMLKVPSVHLHHPRFSPFRFYHTSLLVKGTRDRRLILVERSRHLCTLPLAAAKQSAASPSENLSRKAKKKAIQQSPEALLKQKLDMCSKKGDVLEALRLYDEARRNGVQLSQYHYNVLLYVCSLAEAATESSPNPGLSRGFDIFKQMIVDKVVPNEATFTNGARLAVAKDDPEMAFDMVKQMKAFGIQPRLRSYGPALFGFCRKGDADKAYEVDAHMVESEVVPEEPELAALLKVSMDTKNADKVYKTLQRLRDLVRQVSKSTFDMIEEWFKSEVATKTGVKKWDVKKIRDAVVSGGGGWHGQGWLGTGKWNVKRTEMDENGVCKCCKEKLVCIDINPVETETFAASLTRLACEREVKANFNQFQEWLERHGPFDAVIDGANMGLVNQRSFSFFQLNNTVQRCQQISPSKRLPLVILHKSRVNGGPATYPKNRALLEKWKNAGALYATPPGSNDDWYWLYAAVSCKCLLVTNDEMRDHLFQLLGNSFFPRWKEKHQVRISVTREDGLKLNMPPPYSIVIQESEDGTWHVPMSVEDDLQTSRQWLCAKRSKTP.

The transit peptide at 1–70 (MLRLTCFTPS…SRHLCTLPLA (70 aa)) directs the protein to the chloroplast and mitochondrion. 4 PPR repeats span residues 96 to 130 (PEAL…GVQL), 136 to 174 (NVLL…KVVP), 175 to 209 (NEAT…GIQP), and 210 to 244 (RLRS…EVVP). The region spanning 338–565 (MDENGVCKCC…DLQTSRQWLC (228 aa)) is the PRORP domain. Zn(2+)-binding residues include cysteine 344 and cysteine 347. The Mn(2+) site is built by aspartate 399, aspartate 474, aspartate 475, and aspartate 493. Residues histidine 548 and cysteine 565 each coordinate Zn(2+).

This sequence belongs to the PPR family. P subfamily. Mg(2+) serves as cofactor. The cofactor is Mn(2+).

The protein localises to the mitochondrion. Its subcellular location is the plastid. It localises to the chloroplast. The catalysed reaction is Endonucleolytic cleavage of RNA, removing 5'-extranucleotides from tRNA precursor.. In terms of biological role, endonuclease RNase P responsible for the 5' maturation of tRNA precursors. Preferentially cleaves at the unusual cleavage site, but also able to cleave at the classical cleavage site. Also involved in the maturation of mRNAs in mitochondria. In Arabidopsis thaliana (Mouse-ear cress), this protein is Proteinaceous RNase P 1, chloroplastic/mitochondrial (PRORP1).